The sequence spans 315 residues: Deoxyribonuclease-1-like 1 (315 aa).

Positions 1–29 are cleaved as a signal peptide; it reads MDSSGGFQKHTCGHALLLLLLLLAGGAEA. Active-site residues include glutamate 108 and histidine 159. A disulfide bridge connects residues cysteine 198 and cysteine 235. An N-linked (GlcNAc...) asparagine glycan is attached at asparagine 272.

This sequence belongs to the DNase I family.

Its subcellular location is the endoplasmic reticulum. The polypeptide is Deoxyribonuclease-1-like 1 (DNASE1L1) (Sus scrofa (Pig)).